Consider the following 346-residue polypeptide: Fe(3+) ions import ATP-binding protein FbpC 2 (346 aa).

An ABC transporter domain is found at 2 to 234; the sequence is LELHRVSKSF…PNSEDIATFL (233 aa). 34-41 is a binding site for ATP; that stretch reads GPSGSGKT.

Belongs to the ABC transporter superfamily. Fe(3+) ion importer (TC 3.A.1.10) family. The complex is composed of two ATP-binding proteins (FbpC), two transmembrane proteins (FbpB) and a solute-binding protein (FbpA).

It localises to the cell inner membrane. The enzyme catalyses Fe(3+)(out) + ATP + H2O = Fe(3+)(in) + ADP + phosphate + H(+). Functionally, part of the ABC transporter complex FbpABC involved in Fe(3+) ions import. Responsible for energy coupling to the transport system. The sequence is that of Fe(3+) ions import ATP-binding protein FbpC 2 from Pectobacterium atrosepticum (strain SCRI 1043 / ATCC BAA-672) (Erwinia carotovora subsp. atroseptica).